A 231-amino-acid polypeptide reads, in one-letter code: Trypsin (231 aa).

A propeptide spans F1–K8 (activation peptide). The Peptidase S1 domain maps to I9–A229. Disulfide bonds link C15-C145, C33-C49, C117-C218, C124-C191, C156-C170, and C181-C205. H48 serves as the catalytic Charge relay system. Positions 60, 62, 65, and 70 each coordinate Ca(2+). The active-site Charge relay system is D92. S185 (charge relay system) is an active-site residue.

Belongs to the peptidase S1 family. Ca(2+) is required as a cofactor.

It is found in the secreted. It localises to the extracellular space. The enzyme catalyses Preferential cleavage: Arg-|-Xaa, Lys-|-Xaa.. In Sus scrofa (Pig), this protein is Trypsin.